The sequence spans 382 residues: Chorismate synthase (382 aa).

NADP(+) is bound by residues Arg39 and Arg45. The tract at residues 89-113 (SPEPGGEPRKKALTDARPGHADLTG) is disordered. The segment covering 94-108 (GEPRKKALTDARPGH) has biased composition (basic and acidic residues). Residues 128–130 (RAS), 246–247 (QA), Ala290, 305–309 (KPIAT), and Arg331 each bind FMN.

Belongs to the chorismate synthase family. As to quaternary structure, homotetramer. It depends on FMNH2 as a cofactor.

It catalyses the reaction 5-O-(1-carboxyvinyl)-3-phosphoshikimate = chorismate + phosphate. It functions in the pathway metabolic intermediate biosynthesis; chorismate biosynthesis; chorismate from D-erythrose 4-phosphate and phosphoenolpyruvate: step 7/7. In terms of biological role, catalyzes the anti-1,4-elimination of the C-3 phosphate and the C-6 proR hydrogen from 5-enolpyruvylshikimate-3-phosphate (EPSP) to yield chorismate, which is the branch point compound that serves as the starting substrate for the three terminal pathways of aromatic amino acid biosynthesis. This reaction introduces a second double bond into the aromatic ring system. The polypeptide is Chorismate synthase (Deinococcus radiodurans (strain ATCC 13939 / DSM 20539 / JCM 16871 / CCUG 27074 / LMG 4051 / NBRC 15346 / NCIMB 9279 / VKM B-1422 / R1)).